A 668-amino-acid chain; its full sequence is tRNA 5-methylaminomethyl-2-thiouridine biosynthesis bifunctional protein MnmC (668 aa).

A tRNA (mnm(5)s(2)U34)-methyltransferase region spans residues 1–245; it reads MKHYSIQPAN…KREMLCGVME (245 aa). The tract at residues 270–668 is FAD-dependent cmnm(5)s(2)U34 oxidoreductase; it reads IGGGIACALL…LLKGKAVKAG (399 aa).

This sequence in the N-terminal section; belongs to the methyltransferase superfamily. tRNA (mnm(5)s(2)U34)-methyltransferase family. It in the C-terminal section; belongs to the DAO family. Requires FAD as cofactor.

It is found in the cytoplasm. It carries out the reaction 5-aminomethyl-2-thiouridine(34) in tRNA + S-adenosyl-L-methionine = 5-methylaminomethyl-2-thiouridine(34) in tRNA + S-adenosyl-L-homocysteine + H(+). In terms of biological role, catalyzes the last two steps in the biosynthesis of 5-methylaminomethyl-2-thiouridine (mnm(5)s(2)U) at the wobble position (U34) in tRNA. Catalyzes the FAD-dependent demodification of cmnm(5)s(2)U34 to nm(5)s(2)U34, followed by the transfer of a methyl group from S-adenosyl-L-methionine to nm(5)s(2)U34, to form mnm(5)s(2)U34. This chain is tRNA 5-methylaminomethyl-2-thiouridine biosynthesis bifunctional protein MnmC, found in Shigella boydii serotype 4 (strain Sb227).